A 456-amino-acid chain; its full sequence is Putative gluconeogenesis factor (456 aa).

This sequence belongs to the gluconeogenesis factor family.

It is found in the cytoplasm. Functionally, required for morphogenesis under gluconeogenic growth conditions. This Nostoc sp. (strain PCC 7120 / SAG 25.82 / UTEX 2576) protein is Putative gluconeogenesis factor.